The following is a 338-amino-acid chain: Tetraacyldisaccharide 4'-kinase (338 aa).

49-56 serves as a coordination point for ATP; that stretch reads TVGGTGKT.

It belongs to the LpxK family.

It catalyses the reaction a lipid A disaccharide + ATP = a lipid IVA + ADP + H(+). It functions in the pathway glycolipid biosynthesis; lipid IV(A) biosynthesis; lipid IV(A) from (3R)-3-hydroxytetradecanoyl-[acyl-carrier-protein] and UDP-N-acetyl-alpha-D-glucosamine: step 6/6. Its function is as follows. Transfers the gamma-phosphate of ATP to the 4'-position of a tetraacyldisaccharide 1-phosphate intermediate (termed DS-1-P) to form tetraacyldisaccharide 1,4'-bis-phosphate (lipid IVA). This Geobacter metallireducens (strain ATCC 53774 / DSM 7210 / GS-15) protein is Tetraacyldisaccharide 4'-kinase.